The following is a 352-amino-acid chain: C5a anaphylatoxin chemotactic receptor 1 (352 aa).

Residues 1–11 (MDPISNDSSEI) are compositionally biased toward polar residues. The segment at 1 to 20 (MDPISNDSSEITYDYSDGTP) is disordered. Residues 1–38 (MDPISNDSSEITYDYSDGTPNPDMPADGVYIPKMEPGD) are Extracellular-facing. N6 carries N-linked (GlcNAc...) asparagine glycosylation. Residues Y13 and Y15 each carry the sulfotyrosine modification. Residues 39–65 (IAALIIYLAVFLVGVTGNALVVWVTAF) form a helical membrane-spanning segment. Residues 66-70 (EAKRT) lie on the Cytoplasmic side of the membrane. The helical transmembrane segment at 71 to 94 (VNAIWFLNLAVADLLSCLALPILF) threads the bilayer. Residues 95–111 (TSIVKHNHWPFGDQACI) lie on the Extracellular side of the membrane. A disulfide bridge connects residues C110 and C189. A helical transmembrane segment spans residues 112–133 (VLPSLILLNMYSSILLLATISA). The Cytoplasmic portion of the chain corresponds to 134–154 (DRFLLVFKPIWCQKFRRPGLA). Residues 155–175 (WMACGVTWVLALLLTIPSFVF) form a helical membrane-spanning segment. Residues 176 to 202 (RRIHKDPYSDSILCNIDYSKGPFFIEK) are Extracellular-facing. The chain crosses the membrane as a helical span at residues 203–228 (AIAILRLMVGFVLPLLTLNICYTFLL). Residues 229-244 (IRTWSRKATRSTKTLK) are Cytoplasmic-facing. A helical membrane pass occupies residues 245 to 267 (VVMAVVTCFFVFWLPYQVTGVIL). The Extracellular segment spans residues 268 to 284 (AWLPRSSSTFQSVERLN). The chain crosses the membrane as a helical span at residues 285-305 (SLCVSLAYINCCVNPIIYVMA). Residues 306 to 352 (GQGFHGRLRRSLPSIIRNVLSEDSLGRDSKSFTRSTMDTSTQKSQAV) are Cytoplasmic-facing. Residues S316, S319, S326, S329, S334, S336, and S340 each carry the phosphoserine modification. The tract at residues 332 to 352 (RDSKSFTRSTMDTSTQKSQAV) is disordered. Residues 337–352 (FTRSTMDTSTQKSQAV) show a composition bias toward polar residues.

Belongs to the G-protein coupled receptor 1 family. Homodimer. May also form higher-order oligomers. Interacts (when phosphorylated) with ARRB1 and ARRB2; the interaction is associated with internalization of C5aR. Post-translationally, sulfation plays a critical role in the association of C5aR with C5a, but no significant role in the ability of the receptor to transduce a signal and mobilize calcium in response to a small peptide agonist. In terms of processing, phosphorylated on serine residues in response to C5a binding, resulting in internalization of the receptor and short-term desensitization to the ligand.

It is found in the cell membrane. It localises to the cytoplasmic vesicle. Functionally, receptor for the chemotactic and inflammatory peptide anaphylatoxin C5a. The ligand interacts with at least two sites on the receptor: a high-affinity site on the extracellular N-terminus, and a second site in the transmembrane region which activates downstream signaling events. Receptor activation stimulates chemotaxis, granule enzyme release, intracellular calcium release and superoxide anion production. The chain is C5a anaphylatoxin chemotactic receptor 1 (C5ar1) from Rattus norvegicus (Rat).